Reading from the N-terminus, the 412-residue chain is Candidapepsin-2 (412 aa).

Residues 1–25 (MTTIAIFTKNVLLAIAFALFAQGAA) constitute a signal peptide (or 18, or 21). The propeptide at 26 to 61 (IPDPAKRDDNPGFVALDFEVTRKPLDVNATSELSKR) is activation peptide. Residue N53 is glycosylated (N-linked (GlcNAc...) asparagine). Positions 75 to 383 (YGIRVSVGSN…LDKETVLSRS (309 aa)) constitute a Peptidase A1 domain. The active site involves D93. Cysteines 108 and 113 form a disulfide. Residue D273 is part of the active site. A disulfide bond links C311 and C345.

This sequence belongs to the peptidase A1 family. In terms of processing, O-glycosylated.

Its subcellular location is the secreted. It carries out the reaction Preferential cleavage at the carboxyl of hydrophobic amino acids, but fails to cleave 15-Leu-|-Tyr-16, 16-Tyr-|-Leu-17 and 24-Phe-|-Phe-25 of insulin B chain. Activates trypsinogen, and degrades keratin.. In Candida parapsilosis (Yeast), this protein is Candidapepsin-2 (SAPP2).